A 145-amino-acid chain; its full sequence is 3-dehydroquinate dehydratase (145 aa).

The active-site Proton acceptor is the Tyr24. Substrate is bound by residues Asn75, His81, and Asp88. The active-site Proton donor is the His101. Substrate is bound by residues 102–103 and Arg112; that span reads IS.

This sequence belongs to the type-II 3-dehydroquinase family. As to quaternary structure, homododecamer.

It catalyses the reaction 3-dehydroquinate = 3-dehydroshikimate + H2O. The protein operates within metabolic intermediate biosynthesis; chorismate biosynthesis; chorismate from D-erythrose 4-phosphate and phosphoenolpyruvate: step 3/7. Functionally, catalyzes a trans-dehydration via an enolate intermediate. The sequence is that of 3-dehydroquinate dehydratase from Corynebacterium glutamicum (strain R).